Consider the following 256-residue polypeptide: MYSSVSKRLVSVHILVVVALQLLFIPNVLSLNQTNAYLHHKCVNDQGTYNSGTPYEKNLNSLIRTISTLNLNFGFVHSSNGDAPNSVFIKLQCRGDSYFSKCRSCLATANSEIRRRCPKNKEKIIWYDNCVLEISSIDTFNKIDYQNNFFMYNAKDVSGDIELFNKNTRDLLHELKEKANIKSKKDFMYAAGEKGLGEKKLYAMVQCTKDLTPNNCNVCLNWIMAKLPKCCKGKQGGRVLSTSCNFRYELYPFLMI.

The N-terminal stretch at 1–30 is a signal peptide; it reads MYSSVSKRLVSVHILVVVALQLLFIPNVLS. Gnk2-homologous domains are found at residues 37–139 and 145–253; these read YLHH…SIDT and YQNN…LYPF.

The protein belongs to the cysteine-rich repeat secretory protein family.

The protein localises to the secreted. The protein is Putative cysteine-rich repeat secretory protein 21 (CRRSP21) of Arabidopsis thaliana (Mouse-ear cress).